Reading from the N-terminus, the 306-residue chain is Probable protein ABIL1 (306 aa).

The segment at 200–236 is disordered; the sequence is KNSKTNGARQSEFVLEETKATKPASRGKEPSTSPLPK.

This sequence belongs to the ABI family. Binds SCAR.

It is found in the cytoplasm. The protein localises to the cytoskeleton. Functionally, involved in regulation of actin and microtubule organization. Part of a WAVE complex that activates the Arp2/3 complex. The polypeptide is Probable protein ABIL1 (Oryza sativa subsp. japonica (Rice)).